The chain runs to 238 residues: CD63 antigen (238 aa).

The Cytoplasmic portion of the chain corresponds to 2-11 (AVEGGMKCVK). A helical transmembrane segment spans residues 12 to 32 (FLLYVLLLAFCACAVGLIAIG). Residues 33 to 51 (VAVQVVLKQAITHETTAGS) lie on the Extracellular side of the membrane. The chain crosses the membrane as a helical span at residues 52-72 (LLPVVIIAVGAFLFLVAFVGC). At 73–81 (CGACKENYC) the chain is on the cytoplasmic side. The chain crosses the membrane as a helical span at residues 82–102 (LMITFAIFLSLIMLVEVAVAI). At 103–203 (AGYVFRDQVK…TIAAWLRKNV (101 aa)) the chain is on the extracellular side. N-linked (GlcNAc...) asparagine glycans are attached at residues N130, N150, and N172. Residues 204–224 (LLVAGAALGIAFVEVLGIIFS) form a helical membrane-spanning segment. The Cytoplasmic segment spans residues 225-238 (CCLVKSIRSGYEVM). A Lysosomal targeting motif motif is present at residues 234–238 (GYEVM).

Belongs to the tetraspanin (TM4SF) family. Interacts with TIMP1 and ITGB1 and recruits TIMP1 to ITGB1. Interacts with CD9. Identified in a complex with CD9 and ITGB3. Interacts with PMEL. Interacts with KDR/VEGFR2; identified in a complex with ITGB1 and KDR/VEGFR2 and is required to recruit KDR to ITGB1 complexes. Interacts with SYT7. In terms of processing, palmitoylated at a low, basal level in unstimulated platelets. The level of palmitoylation increases when platelets are activated by thrombin (in vitro). Detected in mast cells and platelets (at protein level).

It localises to the cell membrane. It is found in the lysosome membrane. Its subcellular location is the late endosome membrane. The protein resides in the endosome. The protein localises to the multivesicular body. It localises to the melanosome. It is found in the secreted. Its subcellular location is the extracellular exosome. The protein resides in the cell surface. Functions as a cell surface receptor for TIMP1 and plays a role in the activation of cellular signaling cascades. Plays a role in the activation of ITGB1 and integrin signaling, leading to the activation of AKT, FAK/PTK2 and MAP kinases. Promotes cell survival, reorganization of the actin cytoskeleton, cell adhesion, spreading and migration, via its role in the activation of AKT and FAK/PTK2. Plays a role in VEGFA signaling via its role in regulating the internalization of KDR/VEGFR2. Plays a role in intracellular vesicular transport processes, and is required for normal trafficking of the PMEL luminal domain that is essential for the development and maturation of melanocytes. Plays a role in the adhesion of leukocytes onto endothelial cells via its role in the regulation of SELP trafficking. May play a role in mast cell degranulation in response to Ms4a2/FceRI stimulation, but not in mast cell degranulation in response to other stimuli. The chain is CD63 antigen (Cd63) from Rattus norvegicus (Rat).